The chain runs to 589 residues: Pentalenolactone D synthase (589 aa).

Residues 60-61 (IG), 82-83 (DE), 90-91 (TW), 102-103 (DV), Tyr-108, Val-152, and Met-491 each bind FAD.

The protein belongs to the FAD-binding monooxygenase family. It depends on FAD as a cofactor.

The enzyme catalyses 1-deoxy-11-oxopentalenate + NADPH + O2 + H(+) = pentalenolactone D + NADP(+) + H2O. The protein operates within antibiotic biosynthesis; pentalenolactone biosynthesis. Catalyzes the flavin-dependent Baeyer-Villiger oxidation of 1-deoxy-11-oxopentalenic acid to pentalenolactone D in the biosynthesis of pentalenolactone antibiotic. This is Pentalenolactone D synthase (pntE) from Streptomyces arenae.